A 247-amino-acid chain; its full sequence is Transmembrane protein 33 (247 aa).

The residue at position 2 (alanine 2) is an N-acetylalanine. The Lumenal segment spans residues 2 to 31; the sequence is ADTTPNGPQGAGAVQFMMTNKLDTAMWLSR. A helical transmembrane segment spans residues 32–52; the sequence is LFTVYCSALFVLPLLGLHEAA. Residues 53–100 lie on the Cytoplasmic side of the membrane; it reads SFYQRALLANALTSALRLHQRLPHFQLSRAFLAQALLEDSCHYLLYSL. Residues 101-121 form a helical membrane-spanning segment; it reads IFVNSYPVTMSIFPVLLFSLL. Residues 122–155 are Lumenal-facing; sequence HAATYTKKVLDARGSNSLPLLRSVLDKLSANQQN. A helical transmembrane segment spans residues 156–176; that stretch reads ILKFIACNEIFLMPATVFMLF. At 177–247 the chain is on the cytoplasmic side; the sequence is SGQGSLLQPF…FISRLAPTVP (71 aa).

It belongs to the PER33/POM33 family. As to quaternary structure, interacts with EIF2AK3. Interacts with ARL6IP1, isoform RTN1-A of RTN1, isoform RTN2-B of RTN2, isoform 3 of RTN3 and isoform 3 of RTN4. Interacts with RNF5. Interacts with RNF26. Interacts with PKD2. In terms of tissue distribution, prostate cancer and several cancer cell lines (at protein level). Widely expressed. Expressed at higher levels in endocrine-resistant breast cancer cells as compared to endocrine-sensitive breast cancer cells. Expressed at higher levels in early recurrence breast cancer tissues as compared to non-recurrent breast tumors.

It is found in the endoplasmic reticulum membrane. It localises to the melanosome. The protein resides in the nucleus envelope. Functionally, acts as a regulator of the tubular endoplasmic reticulum (ER) network by modulating intracellular calcium homeostasis. Mechanistically, stimulates PKD2 calcium-dependent activity. Suppresses the RTN3/4-induced formation of the ER tubules. Positively regulates PERK-mediated and IRE1-mediated unfolded protein response signaling. Plays an essential role in VEGF-mediated release of Ca(2+) from ER stores during angiogenesis. Also plays a role in the modulation of innate immune signaling through the cGAS-STING pathway by interacting with RNF26. Participates in lipid metabolism by acting as a downstream effector of the pyruvate kinase/PKM. Forms a complex with RNF5 to facilitate polyubiquitination and subsequent degradation of SCAP on the ER membrane. In Homo sapiens (Human), this protein is Transmembrane protein 33 (TMEM33).